The primary structure comprises 364 residues: Putative apoptosis inhibitor ORF42 (364 aa).

One copy of the BIR 1 repeat lies at 24-89; the sequence is RLATFRGYEY…CREGVVSAPQ (66 aa). The interval 83–126 is disordered; it reads GVVSAPQQQPPPPPSTSIGAVGGDPRPEDMNVPERGWDPPMSKD. Over residues 117 to 126 the composition is skewed to basic and acidic residues; that stretch reads RGWDPPMSKD. BIR repeat units lie at residues 127–193 and 236–300; these read PKST…PLVV and RIAS…ANMA. The RING-type zinc-finger motif lies at 315–350; sequence CVICLGAKADTILKPCLHYSLCYGCSTQVQKCPLCR.

Its function is as follows. May act as an apoptosis inhibitor. The polypeptide is Putative apoptosis inhibitor ORF42 (Magallana gigas (Pacific oyster)).